We begin with the raw amino-acid sequence, 399 residues long: Zinc metalloproteinase nas-25 (399 aa).

Positions 1–20 are cleaved as a signal peptide; sequence MQIYLGITICLVAFLTVIDC. One can recognise a Peptidase M12A domain in the interval 41-237; sequence QVQRDLTYRW…DQINQYYQCY (197 aa). N-linked (GlcNAc...) asparagine glycans are attached at residues N52 and N61. 4 disulfide bridges follow: C82-C236, C106-C126, C240-C260, and C265-C274. H134 contributes to the Zn(2+) binding site. E135 is an active-site residue. Positions 138 and 144 each coordinate Zn(2+). One can recognise an EGF-like domain in the interval 232–275; that stretch reads QYYQCYDSCRNAGQLANCANGGIPNPNNCQVCNCPMGYGGDLCD. Residue N371 is glycosylated (N-linked (GlcNAc...) asparagine).

The cofactor is Zn(2+). Expressed in pharyngeal muscles, pharyngeal-intestinal valve, rectal gland cells and arcade cells.

It localises to the secreted. Metalloprotease. The polypeptide is Zinc metalloproteinase nas-25 (nas-25) (Caenorhabditis elegans).